We begin with the raw amino-acid sequence, 250 residues long: tRNA (guanine-N(1)-)-methyltransferase (250 aa).

Residues G116 and 136–141 (IGDYVL) each bind S-adenosyl-L-methionine.

It belongs to the RNA methyltransferase TrmD family. Homodimer.

It is found in the cytoplasm. It catalyses the reaction guanosine(37) in tRNA + S-adenosyl-L-methionine = N(1)-methylguanosine(37) in tRNA + S-adenosyl-L-homocysteine + H(+). In terms of biological role, specifically methylates guanosine-37 in various tRNAs. In Pseudomonas fluorescens (strain SBW25), this protein is tRNA (guanine-N(1)-)-methyltransferase.